The primary structure comprises 355 residues: UDP-N-acetylglucosamine--N-acetylmuramyl-(pentapeptide) pyrophosphoryl-undecaprenol N-acetylglucosamine transferase (355 aa).

UDP-N-acetyl-alpha-D-glucosamine is bound by residues 15-17 (TGG), N127, R163, S191, I244, 263-268 (ALTVSE), and Q288.

It belongs to the glycosyltransferase 28 family. MurG subfamily.

The protein localises to the cell inner membrane. The catalysed reaction is di-trans,octa-cis-undecaprenyl diphospho-N-acetyl-alpha-D-muramoyl-L-alanyl-D-glutamyl-meso-2,6-diaminopimeloyl-D-alanyl-D-alanine + UDP-N-acetyl-alpha-D-glucosamine = di-trans,octa-cis-undecaprenyl diphospho-[N-acetyl-alpha-D-glucosaminyl-(1-&gt;4)]-N-acetyl-alpha-D-muramoyl-L-alanyl-D-glutamyl-meso-2,6-diaminopimeloyl-D-alanyl-D-alanine + UDP + H(+). It participates in cell wall biogenesis; peptidoglycan biosynthesis. Its function is as follows. Cell wall formation. Catalyzes the transfer of a GlcNAc subunit on undecaprenyl-pyrophosphoryl-MurNAc-pentapeptide (lipid intermediate I) to form undecaprenyl-pyrophosphoryl-MurNAc-(pentapeptide)GlcNAc (lipid intermediate II). The polypeptide is UDP-N-acetylglucosamine--N-acetylmuramyl-(pentapeptide) pyrophosphoryl-undecaprenol N-acetylglucosamine transferase (Salmonella gallinarum (strain 287/91 / NCTC 13346)).